We begin with the raw amino-acid sequence, 449 residues long: MANVVVVGAQWGDEGKGKITDLLSEKAHVVVRYQGGVNAGHTLVVGGQTFKLHLIPSGILYPDKRCIIASGTVIDPEVLLAEIDQLHQLGISTDNLFIAETAHVTLPYHRVIDIAEEERRGIYRLGTTGRGIGPTYADKAERMGIRVVDLMYPDQLRERLSWAIPYKNVLLEKIYNLPPLDPEPIIEQYLAYAERLRPYVTDAALLLTQAIEDRENILFEGAQGTLLDLDYGTYPYVTSSHPIAGGACIGAGIGPTSIDRVIGVAKAYTTRVGEGPFPTELKDEIGAYLGATGAEFGTTTGRQRRCGWFDGVIGRYAVRINGLDCLAITKLDVLDGLDEIKVCVAYEYQGREIRHFPSDARVFAQCKPIYETLPGWKCSTKDCRSIQDLPPEAHDYLKFLAQLMQVPIAIVSLGASRDQTIIVEDPIHGPKRALLYPNGGKRAHALMPD.

GTP contacts are provided by residues 12–18 and 40–42; these read GDEGKGK and GHT. The Proton acceptor role is filled by Asp13. Mg(2+) contacts are provided by Asp13 and Gly40. Residues 13-16, 38-41, Thr128, Arg142, Gln223, Thr238, and Arg302 each bind IMP; these read DEGK and NAGH. The Proton donor role is filled by His41. 298 to 304 contacts substrate; sequence TTTGRQR. Residues Arg304, 330-332, and 412-414 contribute to the GTP site; these read KLD and SLG.

Belongs to the adenylosuccinate synthetase family. In terms of assembly, homodimer. The cofactor is Mg(2+).

Its subcellular location is the cytoplasm. The enzyme catalyses IMP + L-aspartate + GTP = N(6)-(1,2-dicarboxyethyl)-AMP + GDP + phosphate + 2 H(+). Its pathway is purine metabolism; AMP biosynthesis via de novo pathway; AMP from IMP: step 1/2. Its function is as follows. Plays an important role in the de novo pathway of purine nucleotide biosynthesis. Catalyzes the first committed step in the biosynthesis of AMP from IMP. The protein is Adenylosuccinate synthetase of Synechococcus sp. (strain JA-2-3B'a(2-13)) (Cyanobacteria bacterium Yellowstone B-Prime).